We begin with the raw amino-acid sequence, 146 residues long: Hemoglobin subunit beta (146 aa).

The Globin domain occupies 2-146 (QWTAEEKQLI…VAHALARKYH (145 aa)). Residues histidine 63 and histidine 92 each contribute to the heme b site.

This sequence belongs to the globin family. In terms of assembly, heterotetramer of two alpha chains and two beta chains. As to expression, red blood cells.

Functionally, involved in oxygen transport from the lung to the various peripheral tissues. The polypeptide is Hemoglobin subunit beta (HBB) (Turdus merula (Common blackbird)).